The following is a 176-amino-acid chain: Shikimate kinase (176 aa).

12–17 is an ATP binding site; sequence GSGKST. Ser16 lines the Mg(2+) pocket. Asp34, Arg58, and Gly80 together coordinate substrate. ATP is bound at residue Arg117. Arg136 contacts substrate. Residue Arg153 participates in ATP binding.

Belongs to the shikimate kinase family. Monomer. The cofactor is Mg(2+).

The protein localises to the cytoplasm. It catalyses the reaction shikimate + ATP = 3-phosphoshikimate + ADP + H(+). Its pathway is metabolic intermediate biosynthesis; chorismate biosynthesis; chorismate from D-erythrose 4-phosphate and phosphoenolpyruvate: step 5/7. Catalyzes the specific phosphorylation of the 3-hydroxyl group of shikimic acid using ATP as a cosubstrate. This is Shikimate kinase from Mycobacterium avium (strain 104).